We begin with the raw amino-acid sequence, 190 residues long: Xanthine phosphoribosyltransferase 2 (190 aa).

The xanthine site is built by Leu-20 and Asn-27. Residue 129 to 133 coordinates 5-phospho-alpha-D-ribose 1-diphosphate; it reads ANGCA. Lys-157 serves as a coordination point for xanthine.

This sequence belongs to the purine/pyrimidine phosphoribosyltransferase family. Xpt subfamily. As to quaternary structure, homodimer.

The protein localises to the cytoplasm. It catalyses the reaction XMP + diphosphate = xanthine + 5-phospho-alpha-D-ribose 1-diphosphate. It functions in the pathway purine metabolism; XMP biosynthesis via salvage pathway; XMP from xanthine: step 1/1. In terms of biological role, converts the preformed base xanthine, a product of nucleic acid breakdown, to xanthosine 5'-monophosphate (XMP), so it can be reused for RNA or DNA synthesis. This Clostridium botulinum (strain Langeland / NCTC 10281 / Type F) protein is Xanthine phosphoribosyltransferase 2.